A 120-amino-acid chain; its full sequence is Large ribosomal subunit protein uL18 (120 aa).

The protein belongs to the universal ribosomal protein uL18 family. As to quaternary structure, part of the 50S ribosomal subunit; part of the 5S rRNA/L5/L18/L25 subcomplex. Contacts the 5S and 23S rRNAs.

In terms of biological role, this is one of the proteins that bind and probably mediate the attachment of the 5S RNA into the large ribosomal subunit, where it forms part of the central protuberance. The polypeptide is Large ribosomal subunit protein uL18 (Staphylococcus carnosus (strain TM300)).